Here is a 130-residue protein sequence, read N- to C-terminus: Large ribosomal subunit protein bL31c (130 aa).

Residues 1–36 constitute a chloroplast transit peptide; the sequence is MVLTLSNQFLAKIPATPKTLTLPKTSSSTLRPQWSC.

The protein belongs to the bacterial ribosomal protein bL31 family. Type A subfamily. Component of the chloroplast large ribosomal subunit (LSU). Mature 70S chloroplast ribosomes of higher plants consist of a small (30S) and a large (50S) subunit. The 30S small subunit contains 1 molecule of ribosomal RNA (16S rRNA) and 24 different proteins. The 50S large subunit contains 3 rRNA molecules (23S, 5S and 4.5S rRNA) and 33 different proteins.

The protein resides in the plastid. It is found in the chloroplast. Functionally, component of the chloroplast ribosome (chloro-ribosome), a dedicated translation machinery responsible for the synthesis of chloroplast genome-encoded proteins, including proteins of the transcription and translation machinery and components of the photosynthetic apparatus. The sequence is that of Large ribosomal subunit protein bL31c (RPL31) from Spinacia oleracea (Spinach).